A 188-amino-acid chain; its full sequence is Elongation factor P (188 aa).

An N6-(3,6-diaminohexanoyl)-5-hydroxylysine modification is found at K34.

Belongs to the elongation factor P family. In terms of processing, may be beta-lysylated on the epsilon-amino group of Lys-34 by the combined action of EpmA and EpmB, and then hydroxylated on the C5 position of the same residue by EpmC (if this protein is present). Lysylation is critical for the stimulatory effect of EF-P on peptide-bond formation. The lysylation moiety may extend toward the peptidyltransferase center and stabilize the terminal 3-CCA end of the tRNA. Hydroxylation of the C5 position on Lys-34 may allow additional potential stabilizing hydrogen-bond interactions with the P-tRNA.

The protein resides in the cytoplasm. Its pathway is protein biosynthesis; polypeptide chain elongation. In terms of biological role, involved in peptide bond synthesis. Alleviates ribosome stalling that occurs when 3 or more consecutive Pro residues or the sequence PPG is present in a protein, possibly by augmenting the peptidyl transferase activity of the ribosome. Modification of Lys-34 is required for alleviation. The sequence is that of Elongation factor P from Vibrio vulnificus (strain CMCP6).